A 300-amino-acid chain; its full sequence is C-5 sterol desaturase (300 aa).

The next 4 membrane-spanning stretches (helical) occupy residues 3 to 23 (DPVL…WTAA), 68 to 88 (SLAL…QLSA), 91 to 111 (WYTW…YHRI), and 147 to 167 (ILMW…FCSW). One can recognise a Fatty acid hydroxylase domain in the interval 94–227 (WVIAIVGVDL…LIIWDRLFGS (134 aa)).

This sequence belongs to the sterol desaturase family.

Its subcellular location is the cell membrane. This Mycobacterium bovis (strain ATCC BAA-935 / AF2122/97) protein is C-5 sterol desaturase (erg3).